The following is a 535-amino-acid chain: 2-isopropylmalate synthase (535 aa).

Residues 13–274 (VLIFDTTLRD…YFNPFLGRPP (262 aa)) enclose the Pyruvate carboxyltransferase domain. Residues D22, H213, H215, and N249 each contribute to the Mn(2+) site. The interval 414–535 (QLEFVQVSCG…LEQRALHPQA (122 aa)) is regulatory domain.

This sequence belongs to the alpha-IPM synthase/homocitrate synthase family. LeuA type 1 subfamily. As to quaternary structure, homodimer. Mn(2+) is required as a cofactor.

It is found in the cytoplasm. It catalyses the reaction 3-methyl-2-oxobutanoate + acetyl-CoA + H2O = (2S)-2-isopropylmalate + CoA + H(+). The protein operates within amino-acid biosynthesis; L-leucine biosynthesis; L-leucine from 3-methyl-2-oxobutanoate: step 1/4. In terms of biological role, catalyzes the condensation of the acetyl group of acetyl-CoA with 3-methyl-2-oxobutanoate (2-ketoisovalerate) to form 3-carboxy-3-hydroxy-4-methylpentanoate (2-isopropylmalate). The protein is 2-isopropylmalate synthase of Thermosynechococcus vestitus (strain NIES-2133 / IAM M-273 / BP-1).